A 193-amino-acid polypeptide reads, in one-letter code: Acyl carrier protein phosphodiesterase (193 aa).

This sequence belongs to the AcpH family.

The catalysed reaction is holo-[ACP] + H2O = apo-[ACP] + (R)-4'-phosphopantetheine + H(+). Converts holo-ACP to apo-ACP by hydrolytic cleavage of the phosphopantetheine prosthetic group from ACP. The sequence is that of Acyl carrier protein phosphodiesterase from Enterobacter sp. (strain 638).